The following is a 272-amino-acid chain: 3-methyl-2-oxobutanoate hydroxymethyltransferase (272 aa).

Asp-43 and Asp-82 together coordinate Mg(2+). 3-methyl-2-oxobutanoate-binding positions include 43–44 (DS), Asp-82, and Lys-112. Glu-114 lines the Mg(2+) pocket. Glu-179 functions as the Proton acceptor in the catalytic mechanism.

The protein belongs to the PanB family. In terms of assembly, homodecamer; pentamer of dimers. It depends on Mg(2+) as a cofactor.

The protein resides in the cytoplasm. It catalyses the reaction 3-methyl-2-oxobutanoate + (6R)-5,10-methylene-5,6,7,8-tetrahydrofolate + H2O = 2-dehydropantoate + (6S)-5,6,7,8-tetrahydrofolate. Its pathway is cofactor biosynthesis; (R)-pantothenate biosynthesis; (R)-pantoate from 3-methyl-2-oxobutanoate: step 1/2. In terms of biological role, catalyzes the reversible reaction in which hydroxymethyl group from 5,10-methylenetetrahydrofolate is transferred onto alpha-ketoisovalerate to form ketopantoate. The sequence is that of 3-methyl-2-oxobutanoate hydroxymethyltransferase from Staphylococcus aureus (strain Newman).